We begin with the raw amino-acid sequence, 318 residues long: NADH-ubiquinone oxidoreductase chain 1 (318 aa).

8 consecutive transmembrane segments (helical) span residues 1-21 (MLPI…VAFL), 71-91 (LLIL…TPIP), 101-121 (LGLL…LWAG), 145-165 (VTLG…TMQL), 172-192 (HIWL…STLA), 224-244 (FFLA…IMFI), 253-273 (ELFL…FLWI), and 294-314 (LPLT…ISGI).

Belongs to the complex I subunit 1 family.

The protein localises to the mitochondrion inner membrane. The catalysed reaction is a ubiquinone + NADH + 5 H(+)(in) = a ubiquinol + NAD(+) + 4 H(+)(out). In terms of biological role, core subunit of the mitochondrial membrane respiratory chain NADH dehydrogenase (Complex I) that is believed to belong to the minimal assembly required for catalysis. Complex I functions in the transfer of electrons from NADH to the respiratory chain. The immediate electron acceptor for the enzyme is believed to be ubiquinone. In Varanus rudicollis (Rough-necked monitor lizard), this protein is NADH-ubiquinone oxidoreductase chain 1 (MT-ND1).